The sequence spans 445 residues: Phosphoglucosamine mutase (445 aa).

Serine 102 (phosphoserine intermediate) is an active-site residue. Mg(2+)-binding residues include serine 102, aspartate 241, aspartate 243, and aspartate 245. At serine 102 the chain carries Phosphoserine.

It belongs to the phosphohexose mutase family. It depends on Mg(2+) as a cofactor. In terms of processing, activated by phosphorylation.

It catalyses the reaction alpha-D-glucosamine 1-phosphate = D-glucosamine 6-phosphate. Its function is as follows. Catalyzes the conversion of glucosamine-6-phosphate to glucosamine-1-phosphate. The polypeptide is Phosphoglucosamine mutase (Shewanella halifaxensis (strain HAW-EB4)).